A 245-amino-acid chain; its full sequence is Orotidine 5'-phosphate decarboxylase (245 aa).

Residues aspartate 22, lysine 44, 71–80 (DLKFHDIPNT), threonine 131, arginine 192, glutamine 201, glycine 221, and arginine 222 each bind substrate. Lysine 73 acts as the Proton donor in catalysis.

It belongs to the OMP decarboxylase family. Type 1 subfamily. As to quaternary structure, homodimer.

It carries out the reaction orotidine 5'-phosphate + H(+) = UMP + CO2. It participates in pyrimidine metabolism; UMP biosynthesis via de novo pathway; UMP from orotate: step 2/2. Catalyzes the decarboxylation of orotidine 5'-monophosphate (OMP) to uridine 5'-monophosphate (UMP). The chain is Orotidine 5'-phosphate decarboxylase from Escherichia coli O81 (strain ED1a).